A 264-amino-acid chain; its full sequence is Phosphatidylserine decarboxylase proenzyme (264 aa).

Catalysis depends on charge relay system; for autoendoproteolytic cleavage activity residues Asp86, His142, and Ser226. Residue Ser226 is the Schiff-base intermediate with substrate; via pyruvic acid; for decarboxylase activity of the active site. Pyruvic acid (Ser); by autocatalysis is present on Ser226.

This sequence belongs to the phosphatidylserine decarboxylase family. PSD-B subfamily. Prokaryotic type I sub-subfamily. Heterodimer of a large membrane-associated beta subunit and a small pyruvoyl-containing alpha subunit. Requires pyruvate as cofactor. Post-translationally, is synthesized initially as an inactive proenzyme. Formation of the active enzyme involves a self-maturation process in which the active site pyruvoyl group is generated from an internal serine residue via an autocatalytic post-translational modification. Two non-identical subunits are generated from the proenzyme in this reaction, and the pyruvate is formed at the N-terminus of the alpha chain, which is derived from the carboxyl end of the proenzyme. The autoendoproteolytic cleavage occurs by a canonical serine protease mechanism, in which the side chain hydroxyl group of the serine supplies its oxygen atom to form the C-terminus of the beta chain, while the remainder of the serine residue undergoes an oxidative deamination to produce ammonia and the pyruvoyl prosthetic group on the alpha chain. During this reaction, the Ser that is part of the protease active site of the proenzyme becomes the pyruvoyl prosthetic group, which constitutes an essential element of the active site of the mature decarboxylase.

The protein localises to the cell membrane. The catalysed reaction is a 1,2-diacyl-sn-glycero-3-phospho-L-serine + H(+) = a 1,2-diacyl-sn-glycero-3-phosphoethanolamine + CO2. Its pathway is phospholipid metabolism; phosphatidylethanolamine biosynthesis; phosphatidylethanolamine from CDP-diacylglycerol: step 2/2. In terms of biological role, catalyzes the formation of phosphatidylethanolamine (PtdEtn) from phosphatidylserine (PtdSer). The sequence is that of Phosphatidylserine decarboxylase proenzyme from Geobacillus kaustophilus (strain HTA426).